A 249-amino-acid polypeptide reads, in one-letter code: Type I iodothyronine deiodinase (249 aa).

Over 1–12 (MGLPRPGLWLKR) the chain is Extracellular. The helical; Signal-anchor for type III membrane protein transmembrane segment at 13-33 (LWVLVQVAVEVAVGKVLMTLF) threads the bilayer. Residues 34–249 (PERVKQNILA…VRAVLEELHS (216 aa)) lie on the Cytoplasmic side of the membrane. The active site involves U126. Position 126 (U126) is a non-standard amino acid, selenocysteine.

Belongs to the iodothyronine deiodinase family. In terms of assembly, predominantly monomer. Can form homodimers but homodimerization is not essential for enzyme activity.

The protein resides in the cell membrane. The protein localises to the endoplasmic reticulum membrane. It localises to the basolateral cell membrane. The enzyme catalyses 3,3',5-triiodo-L-thyronine + iodide + A + H(+) = L-thyroxine + AH2. It catalyses the reaction 3,3',5'-triiodo-L-thyronine + iodide + A + H(+) = L-thyroxine + AH2. It carries out the reaction 3,3'-diiodo-L-thyronine + iodide + A + H(+) = 3,3',5'-triiodo-L-thyronine + AH2. The catalysed reaction is 3,3'-diiodo-L-thyronine + iodide + A + H(+) = 3,3',5-triiodo-L-thyronine + AH2. The enzyme catalyses 3'-iodo-L-thyronine + iodide + A + H(+) = 3',5'-diiodo-L-thyronine + AH2. It catalyses the reaction 3-iodo-L-thyronine + iodide + A + H(+) = 3,5-diiodo-L-thyronine + AH2. It carries out the reaction 3-iodo-L-thyronine + iodide + A + H(+) = 3,3'-diiodo-L-thyronine + AH2. The catalysed reaction is 3,3'-diiodothyronamine + iodide + A + H(+) = 3,3',5'-triiodothyronamine + AH2. The enzyme catalyses 3'-iodothyronamine + iodide + A + H(+) = 3',5'-diiodothyronamine + AH2. It catalyses the reaction 3-iodothyronamine + iodide + A + H(+) = 3,3'-diiodothyronamine + AH2. It carries out the reaction 3,3'-diiodothyronamine + iodide + A + H(+) = 3,3',5-triiodothyronamine + AH2. The catalysed reaction is 3-iodothyronamine + iodide + A + H(+) = 3,5-diiodothyronamine + AH2. The enzyme catalyses 3,3'-diiodo-L-thyronine sulfate + iodide + A + H(+) = 3,3',5'-triiodo-L-thyronine sulfate + AH2. It catalyses the reaction 3,3',5'-triiodo-L-thyronine sulfate + iodide + A + H(+) = L-thyroxine sulfate + AH2. It carries out the reaction 3,3'-diiodo-L-thyronine sulfate + iodide + A + H(+) = 3,3',5-triiodo-L-thyronine sulfate + AH2. Its function is as follows. Plays a crucial role in the metabolism of thyroid hormones (TH) and has specific roles in TH activation and inactivation by deiodination. Catalyzes the deiodination of L-thyroxine (T4) to 3,5,3'-triiodothyronine (T3) via outer-ring deiodination (ORD) and of T4 to 3,3',5'-triiodothyronine (rT3) via inner-ring deiodination (IRD). Catalyzes the deiodiantion of rT3 to 3,3'-diiodothyronine (3,3'-T2) and 3',5'-diiodothyronine (3',5'-T2) to 3'-monoiodothyronine (3'-T1) via ORD. Catalyzes the deiodination of T3 to 3,3'-T2, 3,5-diiodothyronine (3,5-T2) to 3-monoiodothyronine (3-T1) and 3,3'-T2 to 3-T1 via IRD. Catalyzes the phenolic ring deiodinations of 3,3',5'-triiodothyronamine, 3',5'-diiodothyronamine and 3,3'-diiodothyronamine as well as tyrosyl ring deiodinations of 3,5,3'-triiodothyronamine and 3,5-diiodothyronamine. Catalyzes the deiodination of L-thyroxine sulfate and 3,3',5-triiodo-L-thyronine sulfate via IRD and of 3,3',5'-triiodo-L-thyronine sulfate via ORD. The sequence is that of Type I iodothyronine deiodinase (DIO1) from Oryctolagus cuniculus (Rabbit).